Consider the following 208-residue polypeptide: Orotidine 5'-phosphate decarboxylase (208 aa).

Residues D7, K29, 57–66 (DLKLADIPNT), S109, 162–172 (PGIGAQGGKAK), G185, and R186 contribute to the substrate site. The active-site Proton donor is K59.

The protein belongs to the OMP decarboxylase family. Type 1 subfamily. In terms of assembly, homodimer.

It carries out the reaction orotidine 5'-phosphate + H(+) = UMP + CO2. It participates in pyrimidine metabolism; UMP biosynthesis via de novo pathway; UMP from orotate: step 2/2. Catalyzes the decarboxylation of orotidine 5'-monophosphate (OMP) to uridine 5'-monophosphate (UMP). This chain is Orotidine 5'-phosphate decarboxylase (pyrF), found in Pyrococcus horikoshii (strain ATCC 700860 / DSM 12428 / JCM 9974 / NBRC 100139 / OT-3).